Reading from the N-terminus, the 249-residue chain is UPF0524 protein C3orf70 homolog B (249 aa).

The interval 174 to 230 is disordered; the sequence is GPKMGHCSSPSTSEDSGINALGGHFLESCEEESEEEDELSTDGHSSPGSLWDQDECT. The span at 201–213 shows a compositional bias: acidic residues; the sequence is SCEEESEEEDELS.

This sequence belongs to the UPF0524 family.

In terms of biological role, plays a role in neuronal and neurobehavioral development. Required for normal expression of the postmitotic and mature neuron markers elavl3 and eno2 and neurobehaviors related to circadian rhythm and altered light-dark conditions. The protein is UPF0524 protein C3orf70 homolog B of Danio rerio (Zebrafish).